Reading from the N-terminus, the 277-residue chain is Undecaprenyl-diphosphatase 1 (277 aa).

Helical transmembrane passes span 46–66, 95–115, 119–139, 165–185, 191–211, 216–236, and 256–276; these read VVGF…VYFF, WWVI…KSLI, LASL…MWAA, ILAL…TALI, VAAT…AGLY, ALGT…SFVV, and FVIY…TGVL.

Belongs to the UppP family.

Its subcellular location is the cell membrane. It catalyses the reaction di-trans,octa-cis-undecaprenyl diphosphate + H2O = di-trans,octa-cis-undecaprenyl phosphate + phosphate + H(+). Functionally, catalyzes the dephosphorylation of undecaprenyl diphosphate (UPP). Confers resistance to bacitracin. The polypeptide is Undecaprenyl-diphosphatase 1 (Streptomyces avermitilis (strain ATCC 31267 / DSM 46492 / JCM 5070 / NBRC 14893 / NCIMB 12804 / NRRL 8165 / MA-4680)).